A 98-amino-acid polypeptide reads, in one-letter code: Putative septation protein SpoVG (98 aa).

Belongs to the SpoVG family.

Essential for sporulation. Interferes with or is a negative regulator of the pathway leading to asymmetric septation. The sequence is that of Putative septation protein SpoVG from Bacillus pumilus (strain SAFR-032).